A 175-amino-acid chain; its full sequence is Large ribosomal subunit protein uL6 (175 aa).

The protein belongs to the universal ribosomal protein uL6 family. In terms of assembly, part of the 50S ribosomal subunit.

Its function is as follows. This protein binds to the 23S rRNA, and is important in its secondary structure. It is located near the subunit interface in the base of the L7/L12 stalk, and near the tRNA binding site of the peptidyltransferase center. The protein is Large ribosomal subunit protein uL6 of Xanthomonas axonopodis pv. citri (strain 306).